Reading from the N-terminus, the 305-residue chain is DNA-directed RNA polymerase 35 kDa subunit (305 aa).

Belongs to the poxviridae DNA-directed RNA polymerase 35 kDa subunit family. The DNA-dependent RNA polymerase used for intermediate and late genes expression consists of eight subunits 147 kDa, 133 kDa, 35 kDa, 30 kDa, 22 kDa, 19 kDa, 18 kDa and 7 kDa totalling more than 500 kDa in mass. The same holoenzyme, with the addition of the transcription-specificity factor RAP94, is used for early gene expression.

It localises to the virion. It catalyses the reaction RNA(n) + a ribonucleoside 5'-triphosphate = RNA(n+1) + diphosphate. Its function is as follows. Part of the DNA-dependent RNA polymerase which catalyzes the transcription of viral DNA into RNA using the four ribonucleoside triphosphates as substrates. Responsible for the transcription of early, intermediate and late genes. DNA-dependent RNA polymerase associates with the early transcription factor (ETF), itself composed of D6 and A7, thereby allowing the early genes transcription. Late transcription, and probably also intermediate transcription, require newly synthesized RNA polymerase. The chain is DNA-directed RNA polymerase 35 kDa subunit (OPG156) from Bos taurus (Bovine).